The chain runs to 405 residues: DNA polymerase processivity factor (405 aa).

Positions 354 to 376 (GAGVKRRASEEEESDQPPKKLFP) are disordered. Positions 358 to 373 (KRRASEEEESDQPPKK) match the Bipartite nuclear localization signal motif.

This sequence belongs to the herpesviridae DNA polymerase processivity factor family. In terms of assembly, interacts with the DNA polymerase catalytic subunit. Interacts with the origin-binding protein.

It localises to the host nucleus. Its function is as follows. Plays an essential role in viral DNA replication by acting as the polymerase accessory subunit. Associates with the viral polymerase to increase its processivity and forms high-affinity direct interactions with DNA. Facilitates the origin-binding protein loading onto DNA thus increasing its ability to assemble into a functional complex capable of unwinding duplex DNA. The chain is DNA polymerase processivity factor from Equine herpesvirus 1 (strain Ab4p) (EHV-1).